Reading from the N-terminus, the 210-residue chain is DNA-directed RNA polymerases I, II, and III subunit RPABC1 (210 aa).

M1 carries the post-translational modification N-acetylmethionine. A Glycyl lysine isopeptide (Lys-Gly) (interchain with G-Cter in SUMO2) cross-link involves residue K81.

The protein belongs to the archaeal Rpo5/eukaryotic RPB5 RNA polymerase subunit family. Component of the RNA polymerase I (Pol I), RNA polymerase II (Pol II) and RNA polymerase III (Pol III) complexes consisting of at least 13, 12 and 17 subunits, respectively. Pol I complex consists of a ten-subunit catalytic core composed of POLR1A/RPA1, POLR1B/RPA2, POLR1C/RPAC1, POLR1D/RPAC2, POLR1H/RPA12, POLR2E/RPABC1, POLR2F/RPABC2, POLR2H/RPABC3, POLR2K/RPABC4 and POLR2L/RPABC5; a mobile stalk subunit POLR1F/RPA43 protruding from the core and additional subunits homologous to general transcription factors POLR1E/RPA49 and POLR1G/RPA34. Part of Pol I pre-initiation complex (PIC), in which Pol I core assembles with RRN3 and promoter-bound UTBF and SL1/TIF-IB complex. Pol II complex contains a ten-subunit catalytic core composed of POLR2A/RPB1, POLR2B/RPB2, POLR2C/RPB3, POLR2I/RPB9, POLR2J/RPB11, POLR2E/RPABC1, POLR2F/RPABC2, POLR2H/RPABC3, POLR2K/RPABC4 and POLR2L/RPABC5 and a mobile stalk composed of two subunits POLR2D/RPB4 and POLR2G/RPB7. Part of Pol II(G) complex, in which Pol II core associates with an additional subunit POLR2M; unlike conventional Pol II, Pol II(G) functions as a transcriptional repressor. Part of TBP-based Pol II pre-initiation complex (PIC), in which Pol II core assembles with general transcription factors and other specific initiation factors including GTF2E1, GTF2E2, GTF2F1, GTF2F2, TCEA1, ERCC2, ERCC3, GTF2H2, GTF2H3, GTF2H4, GTF2H5, GTF2A1, GTF2A2, GTF2B and TBP; this large multi-subunit PIC complex mediates DNA unwinding and targets Pol II core to the transcription start site where the first phosphodiester bond forms. In Pol II complex, this subunit is present in 2-fold molar excess over the other subunits. Pol III complex consists of a ten-subunit catalytic core composed of POLR3A/RPC1, POLR3B/RPC2, POLR1C/RPAC1, POLR1D/RPAC2, POLR3K/RPC10, POLR2E/RPABC1, POLR2F/RPABC2, POLR2H/RPABC3, POLR2K/RPABC4 and POLR2L/RPABC5; a mobile stalk composed of two subunits POLR3H/RPC8 and CRCP/RPC9, protruding from the core and functioning primarily in transcription initiation; and additional subunits homologous to general transcription factors of the RNA polymerase II machinery, POLR3C/RPC3-POLR3F/RPC6-POLR3G/RPC7 heterotrimer required for transcription initiation and POLR3D/RPC4-POLR3E/RPC5 heterodimer involved in both transcription initiation and termination. Component of the PAQosome complex which is responsible for the biogenesis of several protein complexes and which consists of R2TP complex members RUVBL1, RUVBL2, RPAP3 and PIH1D1, URI complex members PFDN2, PFDN6, PDRG1, UXT and URI1 as well as ASDURF, POLR2E and DNAAF10/WDR92. Interacts with URI1.

It localises to the nucleus. It is found in the nucleolus. In terms of biological role, DNA-dependent RNA polymerase catalyzes the transcription of DNA into RNA using the four ribonucleoside triphosphates as substrates. Common component of RNA polymerases I, II and III which synthesize ribosomal RNA precursors, mRNA precursors and many functional non-coding RNAs, and small RNAs, such as 5S rRNA and tRNAs, respectively. Pol II is the central component of the basal RNA polymerase II transcription machinery. Pols are composed of mobile elements that move relative to each other. In Pol II, POLR2E/RPABC1 is part of the lower jaw surrounding the central large cleft and thought to grab the incoming DNA template. Seems to be the major component in this process. This Pongo abelii (Sumatran orangutan) protein is DNA-directed RNA polymerases I, II, and III subunit RPABC1 (POLR2E).